Here is a 210-residue protein sequence, read N- to C-terminus: Neurotrophin-4 (210 aa).

An N-terminal signal peptide occupies residues 1–24; it reads MLPLPSCSLPILLLFLLPSVPIES. The propeptide occupies 25–80; it reads QPPPSTLPPFLAPEWDLLSPRVVLSRGAPAGPPLLFLLEAGAFRESAGAPANRSRR. The N-linked (GlcNAc...) asparagine glycan is linked to Asn76. 3 disulfides stabilise this stretch: Cys97/Cys170, Cys141/Cys199, and Cys158/Cys201.

It belongs to the NGF-beta family. As to expression, highest levels in prostate, lower levels in thymus, placenta, and skeletal muscle. Expressed in embryonic and adult tissues.

The protein resides in the secreted. Target-derived survival factor for peripheral sensory sympathetic neurons. May promote ameloblast differentiation and subsequent reduction in proliferation of ameloblasts. The protein is Neurotrophin-4 (NTF4) of Homo sapiens (Human).